A 103-amino-acid chain; its full sequence is Large ribosomal subunit protein bL21 (103 aa).

Belongs to the bacterial ribosomal protein bL21 family. In terms of assembly, part of the 50S ribosomal subunit. Contacts protein L20.

Functionally, this protein binds to 23S rRNA in the presence of protein L20. This is Large ribosomal subunit protein bL21 from Shewanella amazonensis (strain ATCC BAA-1098 / SB2B).